Here is a 215-residue protein sequence, read N- to C-terminus: [PSI+] inducibility protein 3 (215 aa).

At Ser2 the chain carries N-acetylserine. Phosphoserine occurs at positions 52 and 55. An SH3 domain is found at 54–113 (ASLEYVEALYQFDPQQDGDLGLKPGDKVQLLEKLSPEWYKGSCNGRTGIFPANYVKPAFS). Lys80 participates in a covalent cross-link: Glycyl lysine isopeptide (Lys-Gly) (interchain with G-Cter in ubiquitin). The segment at 114 to 189 (GSNGPSNLPP…HQSSHSHLKS (76 aa)) is disordered. The PY motif motif lies at 124–127 (PPQY).

This sequence belongs to the LSB1 family. Interacts with LAS17, RSP5 and SUP35. Ubiquitinated by RSP5. Ubiquitination reduces the protein abundance and its prion-inducing ability.

It localises to the cytoplasm. The protein localises to the nucleus. Its subcellular location is the cytoskeleton. The protein resides in the actin patch. In terms of biological role, overproduction promotes the de novo induction of the [PSI+] prion form of SUP35. The prion-inducing effect depends on the association with the actin cytoskeleton. Also implicated in prion maintenance during heat stress. This chain is [PSI+] inducibility protein 3 (PIN3), found in Saccharomyces cerevisiae (strain ATCC 204508 / S288c) (Baker's yeast).